Reading from the N-terminus, the 1050-residue chain is Sucrose-phosphate synthase 4 (1050 aa).

The segment at 134–167 (QGRNDAEEDLLSELSEGEKDKNDGEKEKSEVVTT) is disordered. Ser-148 is modified (phosphoserine). Residues 149–163 (EGEKDKNDGEKEKSE) are compositionally biased toward basic and acidic residues. A Phosphoserine modification is found at Ser-180.

Belongs to the glycosyltransferase 1 family. In terms of assembly, homodimer or homotetramer.

It catalyses the reaction beta-D-fructose 6-phosphate + UDP-alpha-D-glucose = sucrose 6(F)-phosphate + UDP + H(+). The protein operates within glycan biosynthesis; sucrose biosynthesis; sucrose from D-fructose 6-phosphate and UDP-alpha-D-glucose: step 1/2. Its activity is regulated as follows. Activity is regulated by phosphorylation and moderated by concentration of metabolites and light. Plays a role in photosynthetic sucrose synthesis by catalyzing the rate-limiting step of sucrose biosynthesis from UDP-glucose and fructose- 6-phosphate. Involved in the regulation of carbon partitioning in the leaves of plants. May regulate the synthesis of sucrose and therefore play a major role as a limiting factor in the export of photoassimilates out of the leaf. Plays a role for sucrose availability that is essential for plant growth and fiber elongation. This is Sucrose-phosphate synthase 4 from Arabidopsis thaliana (Mouse-ear cress).